The sequence spans 723 residues: Lim and transglutaminase domain protein ltd-1 (723 aa).

The 68-residue stretch at 5-72 (QHCNRCGKQV…SNHVPIAGPH (68 aa)) folds into the LIM zinc-binding domain.

It belongs to the transglutaminase-like superfamily. In terms of tissue distribution, expressed in the Y and U rectal epithelial cells, in marginal cells of the terminal bulb and isthmus of the pharynx (at protein level).

The protein resides in the cytoplasm. It localises to the cytoskeleton. In terms of biological role, cytoskeleton-associated protein. May play a role in hypodermal cell development. This is Lim and transglutaminase domain protein ltd-1 from Caenorhabditis elegans.